The following is a 401-amino-acid chain: MKEKIVLAYSGGLDTSVAVQWLIDKGYDVVACCLDVGEGKDLDEVYQKALDMGAIECYIIDATEEFSDEYVSYAIKGNLMYENTYPVVSALSRPLISKKLVEIAEKTDAVGIAHGCTGKGNDQVRFEVAIKALNPELKVFAPVRAWGWSREEEIDYAIQHNIPVPINHDSPYSIDQNLWGRANECGILEDPYAAPPADAFDLTREIEDTPDTPDEIVIHFEKGLPVSIDDKAFPLDELILYLNDLAGKHGIGRIDHVENRLVGIKSREIYETPGAEVILKAHKALETITLTKDVAHFKPVIEKQFAEQTYNGLWFSPLTDSLKLFIDSTQEHVTGDVRVKLFKGNATVNGRRSPYSLYNEKLATYTKEDAFNQEAAVGFIEIYGLPTEVNSMLHGGYSNEQ.

8–16 (AYSGGLDTS) serves as a coordination point for ATP. Residue Y85 participates in L-citrulline binding. G115 is a binding site for ATP. L-aspartate is bound by residues T117, N121, and D122. Residue N121 participates in L-citrulline binding. Residues R125, S173, E258, and Y270 each coordinate L-citrulline.

The protein belongs to the argininosuccinate synthase family. Type 1 subfamily. As to quaternary structure, homotetramer.

It localises to the cytoplasm. It carries out the reaction L-citrulline + L-aspartate + ATP = 2-(N(omega)-L-arginino)succinate + AMP + diphosphate + H(+). It participates in amino-acid biosynthesis; L-arginine biosynthesis; L-arginine from L-ornithine and carbamoyl phosphate: step 2/3. In Staphylococcus carnosus (strain TM300), this protein is Argininosuccinate synthase.